Consider the following 930-residue polypeptide: Translation initiation factor IF-2 (930 aa).

A compositionally biased stretch (low complexity) spans 50–67 (FKPAAAPKVEAKPAAPKV). 2 disordered regions span residues 50 to 217 (FKPA…SSEE) and 260 to 346 (EVVP…HELP). Composition is skewed to basic and acidic residues over residues 68 to 90 (SAEK…EAKP) and 110 to 125 (FKAE…AERR). Positions 129–141 (KGNNRDQQQNGNR) are enriched in low complexity. Basic and acidic residues-rich tracts occupy residues 157–167 (RDNRRFNDQAK) and 262–295 (VPEK…DGPR). The segment covering 309 to 318 (NQKNSNWNNN) has biased composition (low complexity). Positions 337–346 (VTERKFHELP) are enriched in basic and acidic residues. Residues 432-599 (ERPPVVTIMG…TVLLVAEIQE (168 aa)) enclose the tr-type G domain. The tract at residues 441 to 448 (GHVDHGKT) is G1. 441-448 (GHVDHGKT) is a binding site for GTP. Residues 466–470 (GITQH) form a G2 region. A G3 region spans residues 487–490 (DTPG). Residues 487–491 (DTPGH) and 541–544 (NKID) each bind GTP. Residues 541–544 (NKID) are G4. Residues 577–579 (SAK) form a G5 region.

It belongs to the TRAFAC class translation factor GTPase superfamily. Classic translation factor GTPase family. IF-2 subfamily.

The protein resides in the cytoplasm. Functionally, one of the essential components for the initiation of protein synthesis. Protects formylmethionyl-tRNA from spontaneous hydrolysis and promotes its binding to the 30S ribosomal subunits. Also involved in the hydrolysis of GTP during the formation of the 70S ribosomal complex. The chain is Translation initiation factor IF-2 from Streptococcus pneumoniae (strain CGSP14).